Consider the following 586-residue polypeptide: Alpha-1,2-mannosyltransferase MNN5 (586 aa).

A signal peptide spans 1-29 (MLIRLKKRKILQVIVSAVVLILFFCSVHN). 4 N-linked (GlcNAc...) asparagine glycosylation sites follow: Asn113, Asn136, Asn259, and Asn264.

It belongs to the MNN1/MNT family. Glycosylated.

The protein localises to the golgi apparatus. It is found in the cis-Golgi network. Its pathway is protein modification; protein glycosylation. In terms of biological role, responsible for addition of first and second mannose residues to the outer chain of core N-linked polysaccharides and to O-linked mannotriose. Implicated in late Golgi modifications. The protein is Alpha-1,2-mannosyltransferase MNN5 (MNN5) of Saccharomyces cerevisiae (strain YJM789) (Baker's yeast).